A 455-amino-acid chain; its full sequence is ATP-dependent protease ATPase subunit HslU (455 aa).

ATP is bound by residues Ile19 and 61–66; that span reads GVGKTE. A disordered region spans residues 144–163; that stretch reads ESKVGFANEPAEDAASKKEK. Residues Asp268, Glu333, and Arg405 each coordinate ATP.

Belongs to the ClpX chaperone family. HslU subfamily. A double ring-shaped homohexamer of HslV is capped on each side by a ring-shaped HslU homohexamer. The assembly of the HslU/HslV complex is dependent on binding of ATP.

The protein localises to the cytoplasm. Functionally, ATPase subunit of a proteasome-like degradation complex; this subunit has chaperone activity. The binding of ATP and its subsequent hydrolysis by HslU are essential for unfolding of protein substrates subsequently hydrolyzed by HslV. HslU recognizes the N-terminal part of its protein substrates and unfolds these before they are guided to HslV for hydrolysis. The polypeptide is ATP-dependent protease ATPase subunit HslU (Francisella tularensis subsp. novicida (strain U112)).